We begin with the raw amino-acid sequence, 541 residues long: 2-isopropylmalate synthase (541 aa).

Residues 8-284 (VIIFDTTLRD…LTNINTRHIY (277 aa)) form the Pyruvate carboxyltransferase domain. Asp-17, His-208, His-210, and Asn-244 together coordinate Mn(2+). A regulatory domain region spans residues 408–541 (RLELVQVSCG…DQPTEVVAGS (134 aa)).

The protein belongs to the alpha-IPM synthase/homocitrate synthase family. LeuA type 1 subfamily. As to quaternary structure, homodimer. Requires Mn(2+) as cofactor.

It localises to the cytoplasm. It carries out the reaction 3-methyl-2-oxobutanoate + acetyl-CoA + H2O = (2S)-2-isopropylmalate + CoA + H(+). It participates in amino-acid biosynthesis; L-leucine biosynthesis; L-leucine from 3-methyl-2-oxobutanoate: step 1/4. Its function is as follows. Catalyzes the condensation of the acetyl group of acetyl-CoA with 3-methyl-2-oxobutanoate (2-ketoisovalerate) to form 3-carboxy-3-hydroxy-4-methylpentanoate (2-isopropylmalate). The protein is 2-isopropylmalate synthase of Trichodesmium erythraeum (strain IMS101).